The chain runs to 53 residues: IgW transmembrane form Tm1T3/Tm6T3/Tm3C4 (53 aa).

The tract at residues 1 to 25 is disordered; that stretch reads VQAVPPDVKGEEGKEEVEDMDGDDN. A compositionally biased stretch (acidic residues) spans 13-24; sequence GKEEVEDMDGDD. The chain crosses the membrane as a helical span at residues 29 to 49; that stretch reads VAAFAILFILSFLYSTFVTVV.

As to expression, expressed in the spleen, pancreas, peripheral blood lymphocytes and at low levels in the epigonal organ.

The protein resides in the membrane. In Ginglymostoma cirratum (Nurse shark), this protein is IgW transmembrane form Tm1T3/Tm6T3/Tm3C4.